Here is a 122-residue protein sequence, read N- to C-terminus: Small ribosomal subunit protein uS13 (122 aa).

Positions 92-122 (HRRGLPVRGQRTHTNARTRKGPAKPIAGKKK) are disordered.

The protein belongs to the universal ribosomal protein uS13 family. As to quaternary structure, part of the 30S ribosomal subunit. Forms a loose heterodimer with protein S19. Forms two bridges to the 50S subunit in the 70S ribosome.

Its function is as follows. Located at the top of the head of the 30S subunit, it contacts several helices of the 16S rRNA. In the 70S ribosome it contacts the 23S rRNA (bridge B1a) and protein L5 of the 50S subunit (bridge B1b), connecting the 2 subunits; these bridges are implicated in subunit movement. Contacts the tRNAs in the A and P-sites. This Paracoccus denitrificans (strain Pd 1222) protein is Small ribosomal subunit protein uS13.